The sequence spans 528 residues: DnaJ homolog 1, mitochondrial (528 aa).

Residues 1-66 (MFSKYLQSRV…REFSRCAALK (66 aa)) constitute a mitochondrion transit peptide. In terms of domain architecture, J spans 86-150 (DPYKTLGVSK…KKKKAFDTYG (65 aa)). Residues 227–308 (GAKKDLSYSV…CMGSGTVRER (82 aa)) form a CR-type zinc finger. CXXCXGXG motif repeat units follow at residues 240-247 (CSSCHGSG), 257-264 (CFACKGTG), 280-287 (CDSCGGTG), and 296-303 (CRSCMGSG). The disordered stretch occupies residues 455–528 (NDSTARRTQS…QNPKKDESSS (74 aa)). Residues 462 to 488 (TQSSPSGTNSSTSTSSTSSKHSTGIST) are compositionally biased toward low complexity. The segment covering 513–528 (LHPDEDQNPKKDESSS) has biased composition (basic and acidic residues).

It localises to the mitochondrion. The sequence is that of DnaJ homolog 1, mitochondrial (mdj1) from Schizosaccharomyces pombe (strain 972 / ATCC 24843) (Fission yeast).